The following is a 386-amino-acid chain: Succinate--CoA ligase [ADP-forming] subunit beta (386 aa).

The region spanning 9–244 (KEILRKYGVS…LDEEDPKEIE (236 aa)) is the ATP-grasp domain. Residues lysine 46, 53–55 (GRG), glutamate 99, cysteine 102, and glutamate 107 each bind ATP. Mg(2+) is bound by residues asparagine 199 and aspartate 213. Substrate-binding positions include asparagine 264 and 321 to 323 (GIM).

Belongs to the succinate/malate CoA ligase beta subunit family. In terms of assembly, heterotetramer of two alpha and two beta subunits. The cofactor is Mg(2+).

The catalysed reaction is succinate + ATP + CoA = succinyl-CoA + ADP + phosphate. The enzyme catalyses GTP + succinate + CoA = succinyl-CoA + GDP + phosphate. Its pathway is carbohydrate metabolism; tricarboxylic acid cycle; succinate from succinyl-CoA (ligase route): step 1/1. In terms of biological role, succinyl-CoA synthetase functions in the citric acid cycle (TCA), coupling the hydrolysis of succinyl-CoA to the synthesis of either ATP or GTP and thus represents the only step of substrate-level phosphorylation in the TCA. The beta subunit provides nucleotide specificity of the enzyme and binds the substrate succinate, while the binding sites for coenzyme A and phosphate are found in the alpha subunit. This chain is Succinate--CoA ligase [ADP-forming] subunit beta, found in Bacillus pumilus (strain SAFR-032).